A 194-amino-acid polypeptide reads, in one-letter code: Peptidyl-tRNA hydrolase (194 aa).

Tyr-17 provides a ligand contact to tRNA. Catalysis depends on His-22, which acts as the Proton acceptor. The tRNA site is built by Tyr-68, Asn-70, and Asn-116.

It belongs to the PTH family. In terms of assembly, monomer.

The protein localises to the cytoplasm. It catalyses the reaction an N-acyl-L-alpha-aminoacyl-tRNA + H2O = an N-acyl-L-amino acid + a tRNA + H(+). In terms of biological role, hydrolyzes ribosome-free peptidyl-tRNAs (with 1 or more amino acids incorporated), which drop off the ribosome during protein synthesis, or as a result of ribosome stalling. Its function is as follows. Catalyzes the release of premature peptidyl moieties from peptidyl-tRNA molecules trapped in stalled 50S ribosomal subunits, and thus maintains levels of free tRNAs and 50S ribosomes. This chain is Peptidyl-tRNA hydrolase, found in Pseudomonas putida (strain GB-1).